Here is a 158-residue protein sequence, read N- to C-terminus: Cytochrome c-type biogenesis protein CcmE (158 aa).

At 1-8 (MNIRRRRR) the chain is on the cytoplasmic side. A helical; Signal-anchor for type II membrane protein membrane pass occupies residues 9–29 (LLVVVAILVGLGLATGLVMYA). At 30-158 (LRSNIDLFYT…GLLNVSEPTR (129 aa)) the chain is on the periplasmic side. Heme is bound by residues His-130 and Tyr-134.

This sequence belongs to the CcmE/CycJ family.

The protein localises to the cell inner membrane. Functionally, heme chaperone required for the biogenesis of c-type cytochromes. Transiently binds heme delivered by CcmC and transfers the heme to apo-cytochromes in a process facilitated by CcmF and CcmH. This is Cytochrome c-type biogenesis protein CcmE from Tatumella citrea (Pantoea citrea).